We begin with the raw amino-acid sequence, 366 residues long: MIRLLIADDSALVRKLLEGVFLEEGDFEIRTARTGLEALDMVRAFDPHVVTLDVQMPGMDGLTCLGRIMLEAPRPVVMISSLTEQNADATLSAMALGAVDVIAKPGGTFSLELDRLRPLLVATIRSAAQAKIRPTHRLADRIRHQFRDAASSPRAKAARRGAARQRAKAEPAPGLVLIGTSTGGPAALNILLPQLPADFPWPVLIAQHLPATFTGAFAKRLDRECALNVVEVDVPRQLEPGTVYIGRGDADVIVAPRPSGLIALSVPARRDYPWHPSVERMVDSALEHYDGKRLLGVLMTGMGDDGATAMTRLQALGGRTIAEAESTAVVWGMPGELVRQGGATLVLPVEEIAAAVIEWGNADAAD.

In terms of domain architecture, Response regulatory spans 3-119 (RLLIADDSAL…SLELDRLRPL (117 aa)). D53 is modified (4-aspartylphosphate). Positions 149–168 (AASSPRAKAARRGAARQRAK) are disordered. The span at 156-166 (KAARRGAARQR) shows a compositional bias: basic residues. The CheB-type methylesterase domain occupies 171-363 (PAPGLVLIGT…AAVIEWGNAD (193 aa)). Catalysis depends on residues S181, H208, and D305.

This sequence belongs to the CheB family. In terms of processing, phosphorylated by CheA. Phosphorylation of the N-terminal regulatory domain activates the methylesterase activity.

The protein localises to the cytoplasm. It carries out the reaction [protein]-L-glutamate 5-O-methyl ester + H2O = L-glutamyl-[protein] + methanol + H(+). It catalyses the reaction L-glutaminyl-[protein] + H2O = L-glutamyl-[protein] + NH4(+). In terms of biological role, involved in chemotaxis. Part of a chemotaxis signal transduction system that modulates chemotaxis in response to various stimuli. Catalyzes the demethylation of specific methylglutamate residues introduced into the chemoreceptors (methyl-accepting chemotaxis proteins or MCP) by CheR. Also mediates the irreversible deamidation of specific glutamine residues to glutamic acid. The sequence is that of Protein-glutamate methylesterase/protein-glutamine glutaminase 2 from Rhodopseudomonas palustris (strain BisB18).